Reading from the N-terminus, the 227-residue chain is MMKAFFIAGTDTDVGKTVASKAILHALAAKDLRTIGYKPVAAGSDKTPEGWRNSDALHLQKAATVAVDYEDINPYALELPASPHIAAKHEKVEIDYAVLSRKLAQHKENADVVLVEGAGGWRVPVSDTDSLSTWVKQEDLPVVLVVGIKLGCLSHALLTAEVIKADGLNLVGWVANRVNPGTEHYAEIIDMLEERLEVPKLGEIPYIPSAKRKDLGKYINADVLLEL.

13–18 is a binding site for ATP; sequence DVGKTV. Threonine 17 provides a ligand contact to Mg(2+). The active site involves lysine 38. Residues aspartate 55, 116–119, 176–177, and 205–207 each bind ATP; these read EGAG, NR, and PYI. Mg(2+) contacts are provided by aspartate 55 and glutamate 116.

It belongs to the dethiobiotin synthetase family. As to quaternary structure, homodimer. Mg(2+) serves as cofactor.

It localises to the cytoplasm. The enzyme catalyses (7R,8S)-7,8-diammoniononanoate + CO2 + ATP = (4R,5S)-dethiobiotin + ADP + phosphate + 3 H(+). It participates in cofactor biosynthesis; biotin biosynthesis; biotin from 7,8-diaminononanoate: step 1/2. Catalyzes a mechanistically unusual reaction, the ATP-dependent insertion of CO2 between the N7 and N8 nitrogen atoms of 7,8-diaminopelargonic acid (DAPA, also called 7,8-diammoniononanoate) to form a ureido ring. The polypeptide is ATP-dependent dethiobiotin synthetase BioD (Vibrio vulnificus (strain CMCP6)).